Consider the following 576-residue polypeptide: Proline--tRNA ligase (576 aa).

It belongs to the class-II aminoacyl-tRNA synthetase family. ProS type 1 subfamily. Homodimer.

It localises to the cytoplasm. The enzyme catalyses tRNA(Pro) + L-proline + ATP = L-prolyl-tRNA(Pro) + AMP + diphosphate. Functionally, catalyzes the attachment of proline to tRNA(Pro) in a two-step reaction: proline is first activated by ATP to form Pro-AMP and then transferred to the acceptor end of tRNA(Pro). As ProRS can inadvertently accommodate and process non-cognate amino acids such as alanine and cysteine, to avoid such errors it has two additional distinct editing activities against alanine. One activity is designated as 'pretransfer' editing and involves the tRNA(Pro)-independent hydrolysis of activated Ala-AMP. The other activity is designated 'posttransfer' editing and involves deacylation of mischarged Ala-tRNA(Pro). The misacylated Cys-tRNA(Pro) is not edited by ProRS. The sequence is that of Proline--tRNA ligase from Helicobacter pylori (strain J99 / ATCC 700824) (Campylobacter pylori J99).